A 519-amino-acid polypeptide reads, in one-letter code: Nif-specific regulatory protein (519 aa).

A Sigma-54 factor interaction domain is found at Ile177–Thr405. Residues Gly205–Glu212 and Ala268–Glu277 contribute to the ATP site. An inter-domain linker region spans residues Leu406–Glu476. 2 residues coordinate a divalent metal cation: Cys419 and Cys424. Residues Arg477–Glu519 form a C-terminal DNA-binding domain region. A DNA-binding region (H-T-H motif) is located at residues Gln491–Arg510.

As to quaternary structure, interacts with sigma-54.

Required for activation of most nif operons, which are directly involved in nitrogen fixation. The chain is Nif-specific regulatory protein (nifA) from Rhizobium leguminosarum.